Reading from the N-terminus, the 1067-residue chain is Myocardin-related transcription factor B (1067 aa).

RPEL repeat units follow at residues 46–71, 90–115, and 134–159; these read EVLQ…PPLK, NFLK…EETL, and DDLN…PVDL. 2 disordered regions span residues 175–223 and 249–286; these read NLDT…NTTI and PLSC…PRVK. Polar residues-rich tracts occupy residues 193–203 and 212–223; these read QPASQESQGSA and SDSSSPVSNTTI. Positions 268-283 are enriched in basic and acidic residues; the sequence is KHTEKPRSKKSKDPKP. An SAP domain is found at 390 to 424; it reads LDDMKVAELKMELKLRGLPVSGTKMDLIERLKPFQ. Residues 540 to 594 adopt a coiled-coil conformation; that stretch reads GNTPNVELDAVEKDRKLQEKEKQIEELKRKLEQEQKLVEVLKKQLELEKRGQQQQ. Polar residues predominate over residues 799–819; it reads ISTSAQPQRSTQLTAVQNGPT. The disordered stretch occupies residues 799–829; that stretch reads ISTSAQPQRSTQLTAVQNGPTSLHEKSSTPP.

As to quaternary structure, interacts with SRF.

Its subcellular location is the nucleus. Its function is as follows. Poor transcriptional factor which uses the canonical single or multiple CArG boxes DNA sequence. Acts as a cofactor of serum response factor (SRF) with the potential to modulate SRF target genes. The sequence is that of Myocardin-related transcription factor B (mrtfb) from Xenopus laevis (African clawed frog).